The sequence spans 120 residues: NAD(P)H-quinone oxidoreductase subunit 3 (120 aa).

Helical transmembrane passes span 6-26, 64-84, and 89-109; these read GYEY…LALT, MFAL…PWAV, and LGLL…VALA.

This sequence belongs to the complex I subunit 3 family. As to quaternary structure, NDH-1 can be composed of about 15 different subunits; different subcomplexes with different compositions have been identified which probably have different functions.

The protein resides in the cellular thylakoid membrane. The catalysed reaction is a plastoquinone + NADH + (n+1) H(+)(in) = a plastoquinol + NAD(+) + n H(+)(out). It carries out the reaction a plastoquinone + NADPH + (n+1) H(+)(in) = a plastoquinol + NADP(+) + n H(+)(out). In terms of biological role, NDH-1 shuttles electrons from an unknown electron donor, via FMN and iron-sulfur (Fe-S) centers, to quinones in the respiratory and/or the photosynthetic chain. The immediate electron acceptor for the enzyme in this species is believed to be plastoquinone. Couples the redox reaction to proton translocation, and thus conserves the redox energy in a proton gradient. Cyanobacterial NDH-1 also plays a role in inorganic carbon-concentration. This is NAD(P)H-quinone oxidoreductase subunit 3 from Prochlorococcus marinus (strain NATL1A).